A 206-amino-acid chain; its full sequence is MELKLLNDQGAQSATLQASDALFGRDYNEALIHQVVVAYMANARSGNRAQKGRAEVSKSTRKPWRQKGTGRARAGMASSPLWRGGGRVFPNSPEDNFSQKLNRKMYRAGVASILSQLAREDRLAIVENFSVEAPKTRLLSQKLKGMGLDSVLVITDEFDENLFLSSRNLHKVLVLEVSETDPVSLVHYDRVIVTKGALAKMEEAWQ.

The segment at N47 to E94 is disordered. Basic residues predominate over residues S59–G70.

Belongs to the universal ribosomal protein uL4 family. In terms of assembly, part of the 50S ribosomal subunit.

Functionally, one of the primary rRNA binding proteins, this protein initially binds near the 5'-end of the 23S rRNA. It is important during the early stages of 50S assembly. It makes multiple contacts with different domains of the 23S rRNA in the assembled 50S subunit and ribosome. In terms of biological role, forms part of the polypeptide exit tunnel. The chain is Large ribosomal subunit protein uL4 from Aromatoleum aromaticum (strain DSM 19018 / LMG 30748 / EbN1) (Azoarcus sp. (strain EbN1)).